Reading from the N-terminus, the 670-residue chain is MLDILLPILIFSALALAAIGAVRRIRLWRQGRPSPVPVLRGLAAVPRRYLVDLHHVVARDKVMSNTHVATAGGFVAAMGLAIVVHGLGLAEGVLGWLLLAASATMFAGSLFVARRRRNPPARLSKGPWMRLPKSLMAFSLGIFVVTLPAVGVLPADAGGWLVALVLAAVVAWGLAELVFGMTWGGPMKHAFAGALHLAFHRRPARFSDKRGGEGRSTGLKALDLDDADAPLGVEKPADFTWNQLLGFDACVQCGRCEAVCPAFAAGQPLNPKKLVQDMVVGMVGGSDARYAGSPYPGKPVGEHAGDPHGPIVAREGTALVDAETLWSCTTCRACVEECPMMIEHVDAIVDMRRHLTLEEGATPGKGAEVIDNLIATDNPGGFDPGGRLNWAADLDLPLMADVERAEVLLWLGDGVFDMRNQRTLRALIKVLRAADVDFAVLGNEERDSGDVARRLGDEATFQSLARRNIDTLSRYRFESIVTCDPHSFHVLKNEYGALYPQGQDADYPVWHHSTFINQLIESGRLPLAPGQAQRVTYHDPCYLGRYNGEYEAPRAVLRALGMELVEMQRSGYRSRCCGGGGGAPITDVPGKQRIPDMRMGDVRETQAEQVVVGCPQCTAMLEGVVPPAGNEATAVKDIAEMVAAALDNTPPATPASHDTAASQATEEVLS.

Transmembrane regions (helical) follow at residues 2–22 (LDIL…IGAV), 68–90 (VATA…LGLA), 94–113 (LGWL…LFVA), 135–155 (LMAF…VLPA), and 159–179 (GWLV…ELVF). 4Fe-4S ferredoxin-type domains follow at residues 241 to 271 (WNQL…PLNP) and 316 to 347 (GTAL…HVDA). C250, C253, C256, C260, C328, C331, C334, and C338 together coordinate [4Fe-4S] cluster. The segment at 648 to 670 (NTPPATPASHDTAASQATEEVLS) is disordered. The segment covering 659-670 (TAASQATEEVLS) has biased composition (polar residues).

It depends on [4Fe-4S] cluster as a cofactor.

Its subcellular location is the cell inner membrane. In terms of biological role, participates in the electron transfer process during N,N-dimethylglycine (DMG) degradation to sarcosine. Probably transfers the electrons from N,N-dimethylglycine/sarcosine dehydrogenase (DMGDH) to the electron transfer flavoprotein (ETF) EtfA-EtfB. The protein is Probable membrane-anchored ferredoxin csal_0991 of Chromohalobacter salexigens (strain ATCC BAA-138 / DSM 3043 / CIP 106854 / NCIMB 13768 / 1H11).